The chain runs to 952 residues: UPF0182 protein SRU_2225 (952 aa).

7 helical membrane-spanning segments follow: residues 12-32 (ILLG…GLVV), 52-72 (AQVL…GGNF), 109-129 (LGYV…SGRW), 168-188 (AVVG…VIAG), 207-227 (LGAN…LDLY), 247-267 (VVIP…GLVG), and 277-297 (LLGI…VLAP). The disordered stretch occupies residues 917–952 (VPLPDTTGTVPPPTSSDTTGTMTAPTGDVSEVTGGS). Residues 931 to 940 (SSDTTGTMTA) show a composition bias toward polar residues.

The protein belongs to the UPF0182 family.

The protein localises to the cell membrane. This is UPF0182 protein SRU_2225 from Salinibacter ruber (strain DSM 13855 / M31).